A 308-amino-acid chain; its full sequence is E3 ubiquitin-protein ligase RING2 (308 aa).

S2 carries the N-acetylserine modification. Residues 2–179 are interaction with HIP2; sequence SQAVQTNGTQ…AEDNGDSSHC (178 aa). Position 41 is a phosphoserine (S41). The RING-type zinc-finger motif lies at 51–91; sequence CPICLDMLKNTMTTKECLHRFCADCIITALRSGNKECPTCR. Residues 93–98 are interaction with nucleosomes via an acidic patch on histone H2A and histone H2B; it reads KLVSKR. Residue K112 forms a Glycyl lysine isopeptide (Lys-Gly) (interchain with G-Cter in ubiquitin) linkage. Phosphoserine occurs at positions 143 and 168. A disordered region spans residues 157 to 206; the sequence is QRGKKQQIENGSGAEDNGDSSHCSNASTHSNQEAGPSNKRTKTSDDSGLE. A compositionally biased stretch (polar residues) spans 176-191; sequence SSHCSNASTHSNQEAG. Residue K249 forms a Glycyl lysine isopeptide (Lys-Gly) (interchain with G-Cter in SUMO2) linkage.

In terms of assembly, component of chromatin-associated Polycomb (PcG) complexes. Component of a number of PRC1-like complexes; these complexes contain either the polycomb group ring finger protein PCGF1, or PCGF2, or PCGF3, or BMI1, or PCGF5, or PCGF6. Distinct PRC1-like complexes are composed of a RING1 subunit (RING1B or RING1A), one of the six PCGF proteins (PCGF1, PCGF2, PCGF3, BMI1, PCGF5 or PCGF6), one PHC protein (PHC1, PHC2 or PHC3) and one of the CBX proteins (CBX2, CBX4, CBX6, CBX7 or CBX8). Part of a complex that contains RNF2, UB2D3 and BMI1; within that complex RNF2 and BMI1 form a tight heterodimer, where UB2D3 interacts only with RNF2. The complex composed of RNF2, UB2D3 and BMI1 binds nucleosomes, and has activity only with nucleosomal histone H2A. Part of a complex that contains PCGF5, RNF2 and UBE2D3. Part of a complex that contains AUTS2, PCGF5, RNF2, CSNK2B and RYBP. Interacts with CBX6 and CBX8. Interacts with PHC1, PCGF2, RYBP, CBX7, CBX4, CBX2, RNF1/RING1, BMI1 and PHC2. Interaction with RYBP and CBX7 is mutually exclusive; both compete for the same binding site on RNF2. Component of repressive BCOR complex containing a Polycomb group subcomplex at least composed of RYBP, PCGF1, BCOR and RING1. Interacts with CBX2 and PHC1. Interacts with CHTOP. Interacts with AURKB. Part of the E2F6.com-1 complex in G0 phase composed of E2F6, MGA, MAX, TFDP1, CBX3, BAT8, EUHMTASE1, RNF1/RING1, RNF2/RING2, MBLR, L3MBTL2 and YAF2. Component of some MLL1/MLL complex, at least composed of the core components KMT2A/MLL1, ASH2L, HCFC1/HCF1, WDR5 and RBBP5, as well as the facultative components BACC1, CHD8, E2F6, HSP70, INO80C, KANSL1, LAS1L, MAX, MCRS1, MGA, MYST1/MOF, PELP1, PHF20, PRP31, RING2, RUVB1/TIP49A, RUVB2/TIP49B, SENP3, TAF1, TAF4, TAF6, TAF7, TAF9 and TEX10. Interacts with RYBP, HIP2 and TFCP2. Interacts with NUPR1. Interacts with SAMD7 in a PHC2-dependent manner. In terms of processing, monoubiquitinated, by auto-ubiquitination. Polyubiquitinated in the presence of UBE2D3 (in vitro).

It is found in the nucleus. The protein resides in the cytoplasm. It localises to the chromosome. The catalysed reaction is S-ubiquitinyl-[E2 ubiquitin-conjugating enzyme]-L-cysteine + [acceptor protein]-L-lysine = [E2 ubiquitin-conjugating enzyme]-L-cysteine + N(6)-ubiquitinyl-[acceptor protein]-L-lysine.. It participates in protein modification; protein ubiquitination. E3 ubiquitin-protein ligase that mediates monoubiquitination of 'Lys-119' of histone H2A (H2AK119Ub), thereby playing a central role in histone code and gene regulation. H2AK119Ub gives a specific tag for epigenetic transcriptional repression and participates in X chromosome inactivation of female mammals. May be involved in the initiation of both imprinted and random X inactivation. Essential component of a Polycomb group (PcG) multiprotein PRC1-like complex, a complex class required to maintain the transcriptionally repressive state of many genes, including Hox genes, throughout development. PcG PRC1 complex acts via chromatin remodeling and modification of histones, rendering chromatin heritably changed in its expressibility. E3 ubiquitin-protein ligase activity is enhanced by BMI1/PCGF4. Acts as the main E3 ubiquitin ligase on histone H2A of the PRC1 complex, while RING1 may rather act as a modulator of RNF2/RING2 activity. Plays a role in the transcriptional repression of genes that are required for pluripotency in embryonic stem cells, thereby contributing to differentiation of the ectodermal and endodermal germ layers. Association with the chromosomal DNA is cell-cycle dependent. In resting B- and T-lymphocytes, interaction with AURKB leads to block its activity, thereby maintaining transcription in resting lymphocytes. Also acts as a negative regulator of autophagy by mediating ubiquitination of AMBRA1, leading to its subsequent degradation. This chain is E3 ubiquitin-protein ligase RING2 (Rnf2), found in Rattus norvegicus (Rat).